The primary structure comprises 87 residues: Small ribosomal subunit protein uS17 (87 aa).

It belongs to the universal ribosomal protein uS17 family. Part of the 30S ribosomal subunit.

One of the primary rRNA binding proteins, it binds specifically to the 5'-end of 16S ribosomal RNA. This Oceanobacillus iheyensis (strain DSM 14371 / CIP 107618 / JCM 11309 / KCTC 3954 / HTE831) protein is Small ribosomal subunit protein uS17.